The following is a 198-amino-acid chain: Peptidyl-tRNA hydrolase (198 aa).

Position 16 (tyrosine 16) interacts with tRNA. Residue histidine 21 is the Proton acceptor of the active site. Residues phenylalanine 67, asparagine 69, and asparagine 115 each contribute to the tRNA site.

This sequence belongs to the PTH family. In terms of assembly, monomer.

The protein localises to the cytoplasm. The enzyme catalyses an N-acyl-L-alpha-aminoacyl-tRNA + H2O = an N-acyl-L-amino acid + a tRNA + H(+). Hydrolyzes ribosome-free peptidyl-tRNAs (with 1 or more amino acids incorporated), which drop off the ribosome during protein synthesis, or as a result of ribosome stalling. Functionally, catalyzes the release of premature peptidyl moieties from peptidyl-tRNA molecules trapped in stalled 50S ribosomal subunits, and thus maintains levels of free tRNAs and 50S ribosomes. This Prochlorococcus marinus (strain MIT 9301) protein is Peptidyl-tRNA hydrolase.